The primary structure comprises 319 residues: ADP-ribosyl cyclase/cyclic ADP-ribose hydrolase 2 (319 aa).

The first 33 residues, 1–33 (MAVQACALSLRLGLWMSLLLPVLPGAGARAAGA), serve as a signal peptide directing secretion. 3 disulfides stabilise this stretch: Cys52/Cys68, Cys84/Cys164, and Cys145/Cys158. 2 N-linked (GlcNAc...) asparagine glycosylation sites follow: Asn67 and Asn96. Trp110 lines the NAD(+) pocket. Residue Trp110 participates in nicotinamide binding. N-linked (GlcNAc...) asparagine glycosylation is present at Asn149. Trp173 is an NAD(+) binding site. Residue Asn193 is glycosylated (N-linked (GlcNAc...) asparagine). Glu211 contributes to the NAD(+) binding site. 2 disulfide bridges follow: Cys239-Cys260 and Cys272-Cys281. The GPI-anchor amidated serine moiety is linked to residue Ser294. Residues 295-319 (PALHAIGDISLIISLLVALASSSQA) constitute a propeptide that is removed on maturation.

It belongs to the ADP-ribosyl cyclase family. In terms of assembly, homodimer. As to expression, pancreatic islets, kidney, spleen, heart, thymus, intestine and salivary gland.

It is found in the cell membrane. It carries out the reaction NAD(+) + H2O = ADP-D-ribose + nicotinamide + H(+). It catalyses the reaction NAD(+) = cyclic ADP-beta-D-ribose + nicotinamide + H(+). The enzyme catalyses cyclic ADP-beta-D-ribose + H2O = ADP-D-ribose. In terms of biological role, catalyzes both the synthesis of cyclic ADP-beta-D-ribose (cADPR) from NAD(+), and its hydrolysis to ADP-D-ribose (ADPR). Cyclic ADPR is known to serve as an endogenous second messenger that elicits calcium release from intracellular stores, and thus regulates the mobilization of intracellular calcium. May be involved in pre-B-cell growth. This Rattus norvegicus (Rat) protein is ADP-ribosyl cyclase/cyclic ADP-ribose hydrolase 2 (Bst1).